The chain runs to 346 residues: Dihydroorotase (346 aa).

Residues His13 and His15 each contribute to the Zn(2+) site. Substrate is bound by residues 15 to 17 (HLR) and Asn41. 3 residues coordinate Zn(2+): Lys99, His136, and His174. Lys99 is modified (N6-carboxylysine). His136 serves as a coordination point for substrate. A substrate-binding site is contributed by Leu219. Asp247 contacts Zn(2+). Asp247 is an active-site residue. Residues His251 and Ala263 each contribute to the substrate site.

Belongs to the metallo-dependent hydrolases superfamily. DHOase family. Class II DHOase subfamily. Homodimer. Zn(2+) is required as a cofactor.

It carries out the reaction (S)-dihydroorotate + H2O = N-carbamoyl-L-aspartate + H(+). Its pathway is pyrimidine metabolism; UMP biosynthesis via de novo pathway; (S)-dihydroorotate from bicarbonate: step 3/3. Its function is as follows. Catalyzes the reversible cyclization of carbamoyl aspartate to dihydroorotate. The protein is Dihydroorotase of Picosynechococcus sp. (strain ATCC 27264 / PCC 7002 / PR-6) (Agmenellum quadruplicatum).